Reading from the N-terminus, the 876-residue chain is Serrate RNA effector molecule homolog (876 aa).

Residues 1–90 are disordered; that stretch reads MGDSDDEYDR…RRDWDEHSSD (90 aa). The residue at position 2 (glycine 2) is an N-acetylglycine. Serine 4 is modified (phosphoserine). Tyrosine 8 is modified (phosphotyrosine). The span at 8–73 shows a compositional bias: basic and acidic residues; sequence YDRRRRDKFR…ERFSPPRHEL (66 aa). Residues serine 67, serine 74, and serine 136 each carry the phosphoserine modification. Lysine 150 participates in a covalent cross-link: Glycyl lysine isopeptide (Lys-Gly) (interchain with G-Cter in SUMO2). Positions 271 to 412 are disordered; that stretch reads EEEEEQAGKP…KPKDAAGLEC (142 aa). Residues 297-347 show a composition bias toward basic and acidic residues; sequence DGERKTNDKDEKKEDGKQAENDSSNDDKTKKSEGDGDKEEKKEDSEKEAKK. Positions 370–387 are enriched in acidic residues; that stretch reads SESESESGQAEEEKEEAE. The segment covering 388–412 has biased composition (basic and acidic residues); the sequence is EALKEKEKPKEEEWEKPKDAAGLEC. 2 positions are modified to phosphoserine: serine 493 and serine 540. Threonine 544 is subject to Phosphothreonine. The residue at position 570 (serine 570) is a Phosphoserine. A disordered region spans residues 575–598; it reads ELLGSSGGAPPEEPPKEGNPAEIN. The residue at position 671 (threonine 671) is a Phosphothreonine. Serine 679 carries the post-translational modification Phosphoserine. An omega-N-methylarginine mark is found at arginine 833, arginine 840, and arginine 850. The interval 835–854 is disordered; it reads NYDAFRGQGGYPGKPRNRMV.

Belongs to the ARS2 family. Interacts with NCBP1 and DROSHA. Interacts with CASP8AP2 and ERBB4. Interacts with LUZP4. Interacts with NCBP2/CBP20 and NCBP3. Interacts with MTREX. Ubiquitously expressed.

The protein localises to the nucleus. It is found in the nucleoplasm. The protein resides in the cytoplasm. Functionally, acts as a mediator between the cap-binding complex (CBC) and the primary microRNAs (miRNAs) processing machinery during cell proliferation. Contributes to the stability and delivery of capped primary miRNA transcripts to the primary miRNA processing complex containing DGCR8 and DROSHA, thereby playing a role in RNA-mediated gene silencing (RNAi) by miRNAs. Binds capped RNAs (m7GpppG-capped RNA); however interaction is probably mediated via its interaction with NCBP1/CBP80 component of the CBC complex. Involved in cell cycle progression at S phase. Does not directly confer arsenite resistance but rather modulates arsenic sensitivity. Independently of its activity on miRNAs, necessary and sufficient to promote neural stem cell self-renewal. Does so by directly binding SOX2 promoter and positively regulating its transcription. This chain is Serrate RNA effector molecule homolog (SRRT), found in Homo sapiens (Human).